Consider the following 248-residue polypeptide: 23S rRNA (guanosine-2'-O-)-methyltransferase RlmB (248 aa).

S-adenosyl-L-methionine contacts are provided by G200, I220, and L229.

Belongs to the class IV-like SAM-binding methyltransferase superfamily. RNA methyltransferase TrmH family. RlmB subfamily.

It is found in the cytoplasm. The enzyme catalyses guanosine(2251) in 23S rRNA + S-adenosyl-L-methionine = 2'-O-methylguanosine(2251) in 23S rRNA + S-adenosyl-L-homocysteine + H(+). Specifically methylates the ribose of guanosine 2251 in 23S rRNA. The chain is 23S rRNA (guanosine-2'-O-)-methyltransferase RlmB from Acinetobacter baylyi (strain ATCC 33305 / BD413 / ADP1).